Reading from the N-terminus, the 241-residue chain is Orotidine 5'-phosphate decarboxylase (241 aa).

Residues D15, K37, 64–73 (DLKYHDIPNT), T126, R187, Q196, G216, and R217 each bind substrate. K66 acts as the Proton donor in catalysis.

The protein belongs to the OMP decarboxylase family. Type 1 subfamily. Homodimer.

The enzyme catalyses orotidine 5'-phosphate + H(+) = UMP + CO2. It functions in the pathway pyrimidine metabolism; UMP biosynthesis via de novo pathway; UMP from orotate: step 2/2. Its function is as follows. Catalyzes the decarboxylation of orotidine 5'-monophosphate (OMP) to uridine 5'-monophosphate (UMP). This chain is Orotidine 5'-phosphate decarboxylase, found in Trichlorobacter lovleyi (strain ATCC BAA-1151 / DSM 17278 / SZ) (Geobacter lovleyi).